We begin with the raw amino-acid sequence, 250 residues long: Small ribosomal subunit protein uS3 (250 aa).

The KH type-2 domain maps to 39–107 (VRAALKKRLY…EVHLNIVEIR (69 aa)). Residues 215–250 (LDKRLATESGPAGEGGGRERGDRPDRGDRRDRRDRA) are disordered. Positions 230–250 (GGRERGDRPDRGDRRDRRDRA) are enriched in basic and acidic residues.

It belongs to the universal ribosomal protein uS3 family. As to quaternary structure, part of the 30S ribosomal subunit. Forms a tight complex with proteins S10 and S14.

In terms of biological role, binds the lower part of the 30S subunit head. Binds mRNA in the 70S ribosome, positioning it for translation. The chain is Small ribosomal subunit protein uS3 from Caulobacter vibrioides (strain ATCC 19089 / CIP 103742 / CB 15) (Caulobacter crescentus).